Reading from the N-terminus, the 316-residue chain is Coproporphyrin III ferrochelatase (316 aa).

Residues Tyr-13, Arg-30, 46 to 47, Ser-54, and Tyr-125 each bind Fe-coproporphyrin III; that span reads RY. Residues His-183 and Glu-264 each contribute to the Fe(2+) site.

This sequence belongs to the ferrochelatase family.

It localises to the cytoplasm. It carries out the reaction Fe-coproporphyrin III + 2 H(+) = coproporphyrin III + Fe(2+). The protein operates within porphyrin-containing compound metabolism; protoheme biosynthesis. In terms of biological role, involved in coproporphyrin-dependent heme b biosynthesis. Catalyzes the insertion of ferrous iron into coproporphyrin III to form Fe-coproporphyrin III. The protein is Coproporphyrin III ferrochelatase of Geobacillus thermodenitrificans (strain NG80-2).